A 194-amino-acid polypeptide reads, in one-letter code: Ribonuclease HII (194 aa).

In terms of domain architecture, RNase H type-2 spans 16–194 (CIVAGIDEAG…PYHRRSFRCC (179 aa)). The a divalent metal cation site is built by Asp22, Glu23, and Asp113.

It belongs to the RNase HII family. It depends on Mn(2+) as a cofactor. Mg(2+) serves as cofactor.

The protein localises to the cytoplasm. The enzyme catalyses Endonucleolytic cleavage to 5'-phosphomonoester.. Endonuclease that specifically degrades the RNA of RNA-DNA hybrids. The sequence is that of Ribonuclease HII from Rickettsia massiliae (strain Mtu5).